A 346-amino-acid polypeptide reads, in one-letter code: N-acetyl-gamma-glutamyl-phosphate reductase (346 aa).

Residue Cys149 is part of the active site.

It belongs to the NAGSA dehydrogenase family. Type 1 subfamily.

It localises to the cytoplasm. It carries out the reaction N-acetyl-L-glutamate 5-semialdehyde + phosphate + NADP(+) = N-acetyl-L-glutamyl 5-phosphate + NADPH + H(+). The protein operates within amino-acid biosynthesis; L-arginine biosynthesis; N(2)-acetyl-L-ornithine from L-glutamate: step 3/4. Its function is as follows. Catalyzes the NADPH-dependent reduction of N-acetyl-5-glutamyl phosphate to yield N-acetyl-L-glutamate 5-semialdehyde. In Geotalea daltonii (strain DSM 22248 / JCM 15807 / FRC-32) (Geobacter daltonii), this protein is N-acetyl-gamma-glutamyl-phosphate reductase.